The primary structure comprises 410 residues: Multifunctional CCA protein (410 aa).

2 residues coordinate ATP: Gly-8 and Arg-11. 2 residues coordinate CTP: Gly-8 and Arg-11. Residues Asp-21 and Asp-23 each coordinate Mg(2+). ATP-binding residues include Arg-91, Arg-137, and Arg-140. Positions 91, 137, and 140 each coordinate CTP. One can recognise an HD domain in the interval 228 to 329 (TGVHVLSVLQ…LELLQSFDVY (102 aa)).

This sequence belongs to the tRNA nucleotidyltransferase/poly(A) polymerase family. Bacterial CCA-adding enzyme type 1 subfamily. As to quaternary structure, monomer. Can also form homodimers and oligomers. Mg(2+) is required as a cofactor. Ni(2+) serves as cofactor.

The enzyme catalyses a tRNA precursor + 2 CTP + ATP = a tRNA with a 3' CCA end + 3 diphosphate. It catalyses the reaction a tRNA with a 3' CCA end + 2 CTP + ATP = a tRNA with a 3' CCACCA end + 3 diphosphate. Its function is as follows. Catalyzes the addition and repair of the essential 3'-terminal CCA sequence in tRNAs without using a nucleic acid template. Adds these three nucleotides in the order of C, C, and A to the tRNA nucleotide-73, using CTP and ATP as substrates and producing inorganic pyrophosphate. tRNA 3'-terminal CCA addition is required both for tRNA processing and repair. Also involved in tRNA surveillance by mediating tandem CCA addition to generate a CCACCA at the 3' terminus of unstable tRNAs. While stable tRNAs receive only 3'-terminal CCA, unstable tRNAs are marked with CCACCA and rapidly degraded. The sequence is that of Multifunctional CCA protein from Pseudomonas aeruginosa (strain ATCC 15692 / DSM 22644 / CIP 104116 / JCM 14847 / LMG 12228 / 1C / PRS 101 / PAO1).